The sequence spans 186 residues: Tumor necrosis factor alpha-induced protein 8-like protein 1 (186 aa).

Belongs to the TNFAIP8 family. Interacts with FBXW5; TNFAIP8L1 competes with TSC2 to bind FBXW5 increasing TSC2 stability by preventing its ubiquitination. In terms of tissue distribution, detected in wide variety tissues, such as neurons in brain, hepatocytes, germ cells of female and male reproductive organs, muscular tissues and variety types of cells of the epithelial origin (at protein level).

It is found in the cytoplasm. Its function is as follows. Acts as a negative regulator of mTOR activity. This is Tumor necrosis factor alpha-induced protein 8-like protein 1 (Tnfaip8l1) from Mus musculus (Mouse).